The following is a 312-amino-acid chain: Ribosomal RNA small subunit methyltransferase H (312 aa).

S-adenosyl-L-methionine is bound by residues glycine 35 to histidine 37, aspartate 55, phenylalanine 79, aspartate 101, and glutamine 108.

The protein belongs to the methyltransferase superfamily. RsmH family.

It localises to the cytoplasm. It carries out the reaction cytidine(1402) in 16S rRNA + S-adenosyl-L-methionine = N(4)-methylcytidine(1402) in 16S rRNA + S-adenosyl-L-homocysteine + H(+). In terms of biological role, specifically methylates the N4 position of cytidine in position 1402 (C1402) of 16S rRNA. The sequence is that of Ribosomal RNA small subunit methyltransferase H from Glaesserella parasuis serovar 5 (strain SH0165) (Haemophilus parasuis).